A 234-amino-acid polypeptide reads, in one-letter code: Preprocaerulein type-4 (234 aa).

Positions 1 to 26 are cleaved as a signal peptide; it reads MFKGILLCVLFAVLSANPLSQPEGFA. Positions 27-73 are excised as a propeptide; it reads DEEERDVRGLASLLGKALKAALKIGANALGGSPQQREANDERRFADG. Residue tyrosine 77 is modified to Sulfotyrosine. The residue at position 83 (phenylalanine 83) is a Phenylalanine amide. The propeptide occupies 87–137; it reads DDEDDVNERDVRGFGSFLGKALKAGLKIGTHFLGGAPQQREANDERRFADG. Sulfotyrosine is present on tyrosine 141. The residue at position 147 (phenylalanine 147) is a Phenylalanine amide. Positions 151–152 are excised as a propeptide; the sequence is DG. Tyrosine 156 bears the Sulfotyrosine mark. Phenylalanine 162 bears the Phenylalanine amide mark. Residues 166 to 216 constitute a propeptide that is removed on maturation; that stretch reads DDEDDVHERDVRGFGSFLGKALKAALKIGANALGGSPQQREANDERRFADG. The disordered stretch occupies residues 198–234; it reads LGGSPQQREANDERRFADGQQDYTGWMDFGRRNGEDD. A Sulfotyrosine modification is found at tyrosine 220. Phenylalanine 226 is subject to Phenylalanine amide. Residues 230 to 234 constitute a propeptide that is removed on maturation; sequence NGEDD.

This sequence belongs to the gastrin/cholecystokinin family. Expressed by the skin glands.

The protein resides in the secreted. The pharmacological activities of caerulein are quite similar to the physiological activities of gastrin and related peptides. In Xenopus borealis (Kenyan clawed frog), this protein is Preprocaerulein type-4.